The primary structure comprises 72 residues: uncharacterized protein (72 aa).

A helical transmembrane segment spans residues 46 to 66 (AIFVFNLCFIPNLCVACIFNV).

Its subcellular location is the membrane. This is an uncharacterized protein from Saccharomyces cerevisiae (strain ATCC 204508 / S288c) (Baker's yeast).